The chain runs to 101 residues: Small ribosomal subunit protein bS18c (101 aa).

Belongs to the bacterial ribosomal protein bS18 family. As to quaternary structure, part of the 30S ribosomal subunit.

It localises to the plastid. The protein resides in the chloroplast. The sequence is that of Small ribosomal subunit protein bS18c from Aethionema cordifolium (Lebanon stonecress).